Consider the following 290-residue polypeptide: Acetylglutamate kinase (290 aa).

Substrate contacts are provided by residues 72 to 73, arginine 94, and asparagine 187; that span reads GG.

This sequence belongs to the acetylglutamate kinase family. ArgB subfamily.

The protein resides in the plastid. It localises to the chloroplast. The enzyme catalyses N-acetyl-L-glutamate + ATP = N-acetyl-L-glutamyl 5-phosphate + ADP. It functions in the pathway amino-acid biosynthesis; L-arginine biosynthesis; N(2)-acetyl-L-ornithine from L-glutamate: step 2/4. Its function is as follows. Catalyzes the ATP-dependent phosphorylation of N-acetyl-L-glutamate. This Cyanidioschyzon merolae (strain NIES-3377 / 10D) (Unicellular red alga) protein is Acetylglutamate kinase.